A 266-amino-acid polypeptide reads, in one-letter code: 3-methyl-2-oxobutanoate hydroxymethyltransferase (266 aa).

Asp-43 and Asp-82 together coordinate Mg(2+). Residues 43 to 44 (DS), Asp-82, and Lys-110 contribute to the 3-methyl-2-oxobutanoate site. Mg(2+) is bound at residue Glu-112. The active-site Proton acceptor is the Glu-179.

The protein belongs to the PanB family. Homodecamer; pentamer of dimers. It depends on Mg(2+) as a cofactor.

It is found in the cytoplasm. It carries out the reaction 3-methyl-2-oxobutanoate + (6R)-5,10-methylene-5,6,7,8-tetrahydrofolate + H2O = 2-dehydropantoate + (6S)-5,6,7,8-tetrahydrofolate. Its pathway is cofactor biosynthesis; (R)-pantothenate biosynthesis; (R)-pantoate from 3-methyl-2-oxobutanoate: step 1/2. Its function is as follows. Catalyzes the reversible reaction in which hydroxymethyl group from 5,10-methylenetetrahydrofolate is transferred onto alpha-ketoisovalerate to form ketopantoate. The protein is 3-methyl-2-oxobutanoate hydroxymethyltransferase of Psychrobacter cryohalolentis (strain ATCC BAA-1226 / DSM 17306 / VKM B-2378 / K5).